The sequence spans 571 residues: 15-cis-phytoene desaturase, chloroplastic/chromoplastic (571 aa).

The transit peptide at methionine 1–proline 96 directs the protein to the chloroplast and chromoplast. FAD-binding positions include alanine 107, glutamate 126–alanine 127, lysine 134, histidine 151–isoleucine 152, and tyrosine 157. Arginine 292 lines the substrate pocket. Residues isoleucine 334 and aspartate 523 each coordinate FAD. Alanine 531 is a substrate binding site. Methionine 533 provides a ligand contact to FAD.

This sequence belongs to the carotenoid/retinoid oxidoreductase family. In terms of assembly, homotetramer. Requires FAD as cofactor.

It is found in the plastid. Its subcellular location is the chloroplast. The protein localises to the chromoplast. The protein resides in the membrane. The enzyme catalyses 2 a plastoquinone + 15-cis-phytoene = 9,9',15-tri-cis-zeta-carotene + 2 a plastoquinol. It participates in carotenoid biosynthesis; lycopene biosynthesis. In terms of biological role, converts phytoene into zeta-carotene via the intermediary of phytofluene by the symmetrical introduction of two double bonds at the C-11 and C-11' positions of phytoene with a concomitant isomerization of two neighboring double bonds at the C9 and C9' positions from trans to cis. This Zea mays (Maize) protein is 15-cis-phytoene desaturase, chloroplastic/chromoplastic (PDS1).